A 288-amino-acid polypeptide reads, in one-letter code: Oxaloacetate decarboxylase (288 aa).

S47 contributes to the substrate binding site. D85 lines the Mg(2+) pocket. Substrate contacts are provided by R156 and H232.

Belongs to the isocitrate lyase/PEP mutase superfamily. Oxaloacetate decarboxylase family. As to quaternary structure, homotetramer; dimer of dimers. Mg(2+) serves as cofactor.

The enzyme catalyses oxaloacetate + H(+) = pyruvate + CO2. Catalyzes the decarboxylation of oxaloacetate into pyruvate. Seems to play a role in maintaining cellular concentrations of bicarbonate and pyruvate. The polypeptide is Oxaloacetate decarboxylase (Bradyrhizobium sp. (strain ORS 278)).